The following is a 209-amino-acid chain: MASKFLREYKLVVVGGGGEGKSCLTIQLIQSHFVDEYDPTIEESYRKQCVIDDEVALLDVLDTAGQEEYSAMREQYMRTGEGFLLVYSITSRQSFEEIMTFQQQILRVKDKDYFPIIVVGNKCDLDKERVVSKQEGESLARQFGCKFIETSAKSRINVENAFYDLVREIRRYNKEMSNPSGFGARAPDSKMDVSEPGESAGCCGKCIVM.

15-22 contacts GTP; sequence GGGGEGKS. The Effector region motif lies at 37–45; the sequence is YDPTIEESY. Residues 62–66 and 121–124 contribute to the GTP site; these read DTAGQ and NKCD. 2 S-palmitoyl cysteine lipidation sites follow: Cys-202 and Cys-203. Cys-206 is subject to Cysteine methyl ester. Residue Cys-206 is the site of S-geranylgeranyl cysteine attachment. Residues 207–209 constitute a propeptide, removed in mature form; that stretch reads IVM.

The protein belongs to the small GTPase superfamily. Ras family.

The protein localises to the cell membrane. The catalysed reaction is GTP + H2O = GDP + phosphate + H(+). With respect to regulation, alternates between an inactive form bound to GDP and an active form bound to GTP. Activated by a guanine nucleotide-exchange factor (GEF) and inactivated by a GTPase-activating protein (GAP). The polypeptide is Ras-like protein (Laccaria bicolor (Bicoloured deceiver)).